Consider the following 177-residue polypeptide: Dual-action ribosomal maturation protein DarP (177 aa).

Residues 1–26 (MKIVGDSEHFKQPYDSDEEYVSKTED) form a disordered region.

The protein belongs to the DarP family.

The protein localises to the cytoplasm. Its function is as follows. Member of a network of 50S ribosomal subunit biogenesis factors which assembles along the 30S-50S interface, preventing incorrect 23S rRNA structures from forming. Promotes peptidyl transferase center (PTC) maturation. In Shewanella sp. (strain MR-4), this protein is Dual-action ribosomal maturation protein DarP.